The primary structure comprises 175 residues: uncharacterized protein (175 aa).

Positions 1 to 10 are enriched in polar residues; the sequence is MSKKINNNKT. The tract at residues 1–21 is disordered; that stretch reads MSKKINNNKTPRNKVKNNNVS.

This is an uncharacterized protein from Ureaplasma parvum serovar 3 (strain ATCC 700970).